The sequence spans 308 residues: Glutamyl-Q tRNA(Asp) synthetase (308 aa).

L-glutamate is bound by residues 19–23 (RFAPS) and Glu-55. Positions 22–32 (PSPSGELHFGS) match the 'HIGH' region motif. Cys-111, Cys-113, Tyr-125, and Cys-129 together coordinate Zn(2+). L-glutamate-binding residues include Tyr-182 and Arg-200. The short motif at 238 to 242 (KLSKQ) is the 'KMSKS' region element. Lys-241 is a binding site for ATP.

Belongs to the class-I aminoacyl-tRNA synthetase family. GluQ subfamily. Zn(2+) serves as cofactor.

Functionally, catalyzes the tRNA-independent activation of glutamate in presence of ATP and the subsequent transfer of glutamate onto a tRNA(Asp). Glutamate is transferred on the 2-amino-5-(4,5-dihydroxy-2-cyclopenten-1-yl) moiety of the queuosine in the wobble position of the QUC anticodon. In Shigella flexneri, this protein is Glutamyl-Q tRNA(Asp) synthetase.